We begin with the raw amino-acid sequence, 221 residues long: Immunoregulatory peptides (221 aa).

Residues 1–19 (MNYLCLVVTLVAVAGAISG) form the signal peptide. Positions 20-45 (EKFSDDNTGYQSTPSLRIRTTPGRRR) are excised as a propeptide. The interval 21–155 (KFSDDNTGYQ…PRTIGPPYTR (135 aa)) is disordered. Residues 25–34 (DNTGYQSTPS) are compositionally biased toward polar residues. A compositionally biased stretch (low complexity) spans 48 to 69 (PRTIGPPYTRRTLRTTTDYSTT). Composition is skewed to polar residues over residues 70–85 (VENG…STEK) and 123–133 (NGTTPAANSTE). Positions 191-221 (EISWTFGPLYTWRTTKGYGTTLETTNATSTS) are excised as a propeptide.

As to expression, salivary glands.

Its subcellular location is the secreted. Its function is as follows. Suppress host inflammatory response. Exerts significant anti-inflammatory functions, either by directly inhibiting host secretion of inflammatory factors such as tumor necrosis factor-alpha (TNF), monocyte chemotactic protein-1 (CCL2), and interferon-gamma (IFNG) or by indirectly increasing the secretion of immunosuppressant cytokine of interleukin-10 (IL10). Also potently scavenges free radical in vitro in a rapid manner. All tested concentrations of this peptide have little effect on the cell viability. In vivo, inhibits hind paw adjuvant-induced inflammation in mouse in a dose-dependent manner. In terms of biological role, suppress host inflammatory response. Exerts significant anti-inflammatory functions, either by directly inhibiting host secretion of inflammatory factors such as tumor necrosis factor-alpha (TNF), monocyte chemotactic protein-1 (CCL2), and interferon-gamma (IFNG) or by indirectly increasing the secretion of immunosuppressant cytokine of interleukin-10 (IL10). Also potently scavenges free radical in vitro in a rapid manner. Low concentrations of this peptide have little effect on the cell viability, whereas high concentrations increase the cell viability by 10-20%. In vivo, inhibits hind paw adjuvant-induced inflammation in mouse in a dose-dependent manner. Functionally, not studied but probably similar to Hyalomin-B1. The sequence is that of Immunoregulatory peptides from Hyalomma asiaticum asiaticum (Tick).